Here is a 203-residue protein sequence, read N- to C-terminus: Small ribosomal subunit protein uS4 (203 aa).

Residues 93-156 (RRLDNVVYRL…LKVPAILEAV (64 aa)) form the S4 RNA-binding domain.

This sequence belongs to the universal ribosomal protein uS4 family. As to quaternary structure, part of the 30S ribosomal subunit. Contacts protein S5. The interaction surface between S4 and S5 is involved in control of translational fidelity.

In terms of biological role, one of the primary rRNA binding proteins, it binds directly to 16S rRNA where it nucleates assembly of the body of the 30S subunit. With S5 and S12 plays an important role in translational accuracy. In Streptococcus pneumoniae serotype 2 (strain D39 / NCTC 7466), this protein is Small ribosomal subunit protein uS4.